Reading from the N-terminus, the 291-residue chain is Lysosomal amino acid transporter 1 homolog (291 aa).

The Lumenal segment spans residues 1–37; that stretch reads MVWKKLGSRNFSSCPSGSIQWIWDVLGECAQDGWDEA. Asn10 is a glycosylation site (N-linked (GlcNAc...) asparagine). In terms of domain architecture, PQ-loop 1 spans 34-100; sequence WDEASVGLGL…LADQLPLQTY (67 aa). Residues 38 to 58 form a helical membrane-spanning segment; sequence SVGLGLISILCFAASTFPQFI. Residues 59–71 lie on the Cytoplasmic side of the membrane; that stretch reads KAYKTGNMDQALS. The chain crosses the membrane as a helical span at residues 72–92; the sequence is LWFLLGWIGGDSCNLIGSFLA. Over 93 to 98 the chain is Lumenal; that stretch reads DQLPLQ. The helical transmembrane segment at 99 to 119 threads the bilayer; it reads TYTAVYYVLADLVMLTLYFYY. Topologically, residues 120 to 134 are cytoplasmic; that stretch reads KFRTRPSLLSAPINS. A helical membrane pass occupies residues 135–155; the sequence is VLLFLMGMACATPLLSAAGPV. Residues 156–182 are Lumenal-facing; the sequence is AAPREAFRGRALLSVESGSKPFTRQEV. A helical membrane pass occupies residues 183–203; it reads IGFVIGSISSVLYLLSRLPQI. The region spanning 184 to 243 is the PQ-loop 2 domain; sequence GFVIGSISSVLYLLSRLPQIRTNFLRKSTQGISYSLFALVMLGNTLYGLSVLLKNPEEGQ. The Cytoplasmic segment spans residues 204–214; sequence RTNFLRKSTQG. A helical transmembrane segment spans residues 215–235; sequence ISYSLFALVMLGNTLYGLSVL. Topologically, residues 236-254 are lumenal; the sequence is LKNPEEGQSEGSYLLHHLP. A helical transmembrane segment spans residues 255-275; that stretch reads WLVGSLGVLLLDTIISIQFLV. Residues 276 to 291 lie on the Cytoplasmic side of the membrane; the sequence is YRRSTAASELEPLLPS. A Di-leucine motif motif is present at residues 288-289; the sequence is LL.

The protein belongs to the laat-1 family.

The protein resides in the lysosome membrane. In terms of biological role, amino acid transporter that specifically mediates the pH-dependent export of the cationic amino acids arginine, histidine and lysine from lysosomes. This Homo sapiens (Human) protein is Lysosomal amino acid transporter 1 homolog.